Reading from the N-terminus, the 212-residue chain is N-(5'-phosphoribosyl)anthranilate isomerase (212 aa).

Belongs to the TrpF family.

It carries out the reaction N-(5-phospho-beta-D-ribosyl)anthranilate = 1-(2-carboxyphenylamino)-1-deoxy-D-ribulose 5-phosphate. It participates in amino-acid biosynthesis; L-tryptophan biosynthesis; L-tryptophan from chorismate: step 3/5. This chain is N-(5'-phosphoribosyl)anthranilate isomerase, found in Microcystis aeruginosa (strain NIES-843 / IAM M-2473).